The sequence spans 149 residues: Ribonuclease pancreatic (149 aa).

The first 25 residues, 1 to 25, serve as a signal peptide directing secretion; that stretch reads MGLEKSFILFSLLVLVLGWVQPSLG. Substrate-binding residues include Lys-32 and Arg-35. His-37 acts as the Proton acceptor in catalysis. Disulfide bonds link Cys-51–Cys-109, Cys-65–Cys-120, Cys-83–Cys-135, and Cys-90–Cys-97. Substrate contacts are provided by residues 66 to 70, Lys-91, and Arg-110; that span reads KPVNT. His-144 serves as the catalytic Proton donor.

The protein belongs to the pancreatic ribonuclease family. Monomer. Interacts with and forms tight 1:1 complexes with RNH1. Dimerization of two such complexes may occur. Interaction with RNH1 inhibits this protein. As to expression, pancreas.

It localises to the secreted. It catalyses the reaction an [RNA] containing cytidine + H2O = an [RNA]-3'-cytidine-3'-phosphate + a 5'-hydroxy-ribonucleotide-3'-[RNA].. The enzyme catalyses an [RNA] containing uridine + H2O = an [RNA]-3'-uridine-3'-phosphate + a 5'-hydroxy-ribonucleotide-3'-[RNA].. Endonuclease that catalyzes the cleavage of RNA on the 3' side of pyrimidine nucleotides. Acts on single-stranded and double-stranded RNA. The chain is Ribonuclease pancreatic (RNASE1) from Leopoldamys edwardsi (Edwards's long-tailed giant rat).